Reading from the N-terminus, the 492-residue chain is Protein nucleotidyltransferase YdiU (492 aa).

Residues glycine 94, glycine 96, arginine 97, lysine 117, aspartate 129, glycine 130, arginine 180, and arginine 187 each contribute to the ATP site. Aspartate 257 (proton acceptor) is an active-site residue. Mg(2+)-binding residues include asparagine 258 and aspartate 267. Aspartate 267 lines the ATP pocket.

Belongs to the SELO family. The cofactor is Mg(2+). Mn(2+) is required as a cofactor.

It carries out the reaction L-seryl-[protein] + ATP = 3-O-(5'-adenylyl)-L-seryl-[protein] + diphosphate. The catalysed reaction is L-threonyl-[protein] + ATP = 3-O-(5'-adenylyl)-L-threonyl-[protein] + diphosphate. The enzyme catalyses L-tyrosyl-[protein] + ATP = O-(5'-adenylyl)-L-tyrosyl-[protein] + diphosphate. It catalyses the reaction L-histidyl-[protein] + UTP = N(tele)-(5'-uridylyl)-L-histidyl-[protein] + diphosphate. It carries out the reaction L-seryl-[protein] + UTP = O-(5'-uridylyl)-L-seryl-[protein] + diphosphate. The catalysed reaction is L-tyrosyl-[protein] + UTP = O-(5'-uridylyl)-L-tyrosyl-[protein] + diphosphate. Functionally, nucleotidyltransferase involved in the post-translational modification of proteins. It can catalyze the addition of adenosine monophosphate (AMP) or uridine monophosphate (UMP) to a protein, resulting in modifications known as AMPylation and UMPylation. This chain is Protein nucleotidyltransferase YdiU, found in Halalkalibacterium halodurans (strain ATCC BAA-125 / DSM 18197 / FERM 7344 / JCM 9153 / C-125) (Bacillus halodurans).